Consider the following 500-residue polypeptide: ATP synthase subunit alpha (500 aa).

An ATP-binding site is contributed by 169 to 176; the sequence is GDRQTGKT.

It belongs to the ATPase alpha/beta chains family. In terms of assembly, F-type ATPases have 2 components, CF(1) - the catalytic core - and CF(0) - the membrane proton channel. CF(1) has five subunits: alpha(3), beta(3), gamma(1), delta(1), epsilon(1). CF(0) has three main subunits: a(1), b(2) and c(9-12). The alpha and beta chains form an alternating ring which encloses part of the gamma chain. CF(1) is attached to CF(0) by a central stalk formed by the gamma and epsilon chains, while a peripheral stalk is formed by the delta and b chains.

It localises to the cell inner membrane. It catalyses the reaction ATP + H2O + 4 H(+)(in) = ADP + phosphate + 5 H(+)(out). Functionally, produces ATP from ADP in the presence of a proton gradient across the membrane. The alpha chain is a regulatory subunit. This is ATP synthase subunit alpha from Fusobacterium nucleatum subsp. nucleatum (strain ATCC 25586 / DSM 15643 / BCRC 10681 / CIP 101130 / JCM 8532 / KCTC 2640 / LMG 13131 / VPI 4355).